A 277-amino-acid polypeptide reads, in one-letter code: Large ribosomal subunit protein uL2 (277 aa).

2 disordered regions span residues 36–55 and 213–277; these read PLPK…RHHG and WKGI…RKKK.

This sequence belongs to the universal ribosomal protein uL2 family. As to quaternary structure, part of the 50S ribosomal subunit. Forms a bridge to the 30S subunit in the 70S ribosome.

In terms of biological role, one of the primary rRNA binding proteins. Required for association of the 30S and 50S subunits to form the 70S ribosome, for tRNA binding and peptide bond formation. It has been suggested to have peptidyltransferase activity; this is somewhat controversial. Makes several contacts with the 16S rRNA in the 70S ribosome. This is Large ribosomal subunit protein uL2 from Staphylococcus saprophyticus subsp. saprophyticus (strain ATCC 15305 / DSM 20229 / NCIMB 8711 / NCTC 7292 / S-41).